Consider the following 65-residue polypeptide: Small ribosomal subunit protein bS21 (65 aa).

Residues 45-65 (GRLKRSRSRRRAQRANEERNS) are disordered. Basic residues predominate over residues 48–57 (KRSRSRRRAQ).

The protein belongs to the bacterial ribosomal protein bS21 family.

The protein is Small ribosomal subunit protein bS21 of Chlorobium phaeobacteroides (strain DSM 266 / SMG 266 / 2430).